A 307-amino-acid polypeptide reads, in one-letter code: Cytidine deaminase 7 (307 aa).

2 CMP/dCMP-type deaminase domains span residues 22-155 (TEPI…FTPD) and 185-307 (SDCS…FITE). 63 to 65 (NVE) serves as a coordination point for substrate. His76 contacts Zn(2+). The Proton donor role is filled by Glu78. Zn(2+)-binding residues include Cys111 and Cys114.

This sequence belongs to the cytidine and deoxycytidylate deaminase family. Homodimer. Zn(2+) serves as cofactor.

It catalyses the reaction cytidine + H2O + H(+) = uridine + NH4(+). The catalysed reaction is 2'-deoxycytidine + H2O + H(+) = 2'-deoxyuridine + NH4(+). This enzyme scavenges exogenous and endogenous cytidine and 2'-deoxycytidine for UMP synthesis. In Arabidopsis thaliana (Mouse-ear cress), this protein is Cytidine deaminase 7 (CDA7).